A 427-amino-acid chain; its full sequence is MIDVKDLIEQPEKYRASQEARGEDASLVDRVVEADAARRSSIAGFEQLRAEQKAFGKRVAQAKGEEKQALLAEVKDLAARVKEAESAAGAAEARLAELQRAFPNLIVDGVPAGGEDDFVVLKEVGTPRDFAAEGFEPRDHLELGELLGAIDMERGAKVSGARFSFLTGVGARLELALMQLGLDLALENGFVPVIPPTLVRPETMQGTGFDVEHDDEIYRLERDDLYLVGTSEVALAGFHAGEIMDVSAPVRYAGWSTCYRREAGSAGKDTRGIIRVHQFNKLEMFIYAAQEDAEAEHARLLAWEERMLGAIEVPYRVIDIAAGDLGLSAARKFDCEAWVPTQGTYRELTSTSNCTTFQARRLNIRERVRTEDGSKGGTRMVATLNGTLATTRWIVAILENHQNADGSVTVPAALRPYLGGMERFELV.

Thr-230–Glu-232 contributes to the L-serine binding site. ATP-binding positions include Arg-260–Glu-262 and Val-276. Glu-283 contributes to the L-serine binding site. ATP is bound at residue Glu-347 to Ser-350. Thr-387 contributes to the L-serine binding site.

Belongs to the class-II aminoacyl-tRNA synthetase family. Type-1 seryl-tRNA synthetase subfamily. In terms of assembly, homodimer. The tRNA molecule binds across the dimer.

The protein localises to the cytoplasm. The enzyme catalyses tRNA(Ser) + L-serine + ATP = L-seryl-tRNA(Ser) + AMP + diphosphate + H(+). It carries out the reaction tRNA(Sec) + L-serine + ATP = L-seryl-tRNA(Sec) + AMP + diphosphate + H(+). It functions in the pathway aminoacyl-tRNA biosynthesis; selenocysteinyl-tRNA(Sec) biosynthesis; L-seryl-tRNA(Sec) from L-serine and tRNA(Sec): step 1/1. Functionally, catalyzes the attachment of serine to tRNA(Ser). Is also able to aminoacylate tRNA(Sec) with serine, to form the misacylated tRNA L-seryl-tRNA(Sec), which will be further converted into selenocysteinyl-tRNA(Sec). The chain is Serine--tRNA ligase from Micrococcus luteus (strain ATCC 4698 / DSM 20030 / JCM 1464 / CCM 169 / CCUG 5858 / IAM 1056 / NBRC 3333 / NCIMB 9278 / NCTC 2665 / VKM Ac-2230) (Micrococcus lysodeikticus).